The chain runs to 303 residues: Coenzyme PQQ synthesis protein B (303 aa).

It belongs to the PqqB family.

It participates in cofactor biosynthesis; pyrroloquinoline quinone biosynthesis. Functionally, may be involved in the transport of PQQ or its precursor to the periplasm. This chain is Coenzyme PQQ synthesis protein B, found in Pseudomonas fluorescens (strain SBW25).